Consider the following 187-residue polypeptide: Elongation factor P (187 aa).

It belongs to the elongation factor P family.

The protein resides in the cytoplasm. Its pathway is protein biosynthesis; polypeptide chain elongation. In terms of biological role, involved in peptide bond synthesis. Stimulates efficient translation and peptide-bond synthesis on native or reconstituted 70S ribosomes in vitro. Probably functions indirectly by altering the affinity of the ribosome for aminoacyl-tRNA, thus increasing their reactivity as acceptors for peptidyl transferase. The protein is Elongation factor P of Ruegeria pomeroyi (strain ATCC 700808 / DSM 15171 / DSS-3) (Silicibacter pomeroyi).